A 284-amino-acid polypeptide reads, in one-letter code: MQNKIVKIGNIDVANDKPFVLFGGMNVLESRDMAMQVCEAYVKVTEKLGVPYVFKASFDKANRSSIHSYRGPGMEEGLKIFQELKDTFGVKIITDVHEIYQCQPVADVVDIIQLPAFLARQTDLVEAMAKTGAVINVKKPQFLSPSQMGNIVEKIEECGNDKIILCDRGTNFGYDNLIVDMLGFSVMKKASKGSPVIFDVTHSLQCRDPFGAASSGRRAQVTELARSGLAVGIAGLFLEAHPNPNQAKCDGPSALPLSALEGFVSQMKAIDDLVKSFPELDTSI.

This sequence belongs to the KdsA family.

Its subcellular location is the cytoplasm. It carries out the reaction D-arabinose 5-phosphate + phosphoenolpyruvate + H2O = 3-deoxy-alpha-D-manno-2-octulosonate-8-phosphate + phosphate. Its pathway is carbohydrate biosynthesis; 3-deoxy-D-manno-octulosonate biosynthesis; 3-deoxy-D-manno-octulosonate from D-ribulose 5-phosphate: step 2/3. It participates in bacterial outer membrane biogenesis; lipopolysaccharide biosynthesis. This is 2-dehydro-3-deoxyphosphooctonate aldolase (kdsA) from Haemophilus influenzae (strain ATCC 51907 / DSM 11121 / KW20 / Rd).